Here is a 262-residue protein sequence, read N- to C-terminus: Acyl-[acyl-carrier-protein]--UDP-N-acetylglucosamine O-acyltransferase (262 aa).

The protein belongs to the transferase hexapeptide repeat family. LpxA subfamily. Homotrimer.

It is found in the cytoplasm. It carries out the reaction a (3R)-hydroxyacyl-[ACP] + UDP-N-acetyl-alpha-D-glucosamine = a UDP-3-O-[(3R)-3-hydroxyacyl]-N-acetyl-alpha-D-glucosamine + holo-[ACP]. It functions in the pathway glycolipid biosynthesis; lipid IV(A) biosynthesis; lipid IV(A) from (3R)-3-hydroxytetradecanoyl-[acyl-carrier-protein] and UDP-N-acetyl-alpha-D-glucosamine: step 1/6. Involved in the biosynthesis of lipid A, a phosphorylated glycolipid that anchors the lipopolysaccharide to the outer membrane of the cell. The chain is Acyl-[acyl-carrier-protein]--UDP-N-acetylglucosamine O-acyltransferase from Sodalis glossinidius (strain morsitans).